The chain runs to 231 residues: Nerve growth factor (231 aa).

The signal sequence occupies residues 1–18; sequence MSMLYYTLLIAILISVQA. The propeptide occupies 19–114; that stretch reads APKTKDHAPA…SLNKTIRAKR (96 aa). Positions 24 to 53 are disordered; that stretch reads DHAPARSSAKSRIPHHTHRTKSLHHSHGKL. The segment covering 35–50 has biased composition (basic residues); it reads RIPHHTHRTKSLHHSH. N-linked (GlcNAc...) asparagine glycosylation is found at Asn-63, Asn-107, and Asn-158. Disulfide bonds link Cys-128–Cys-193, Cys-171–Cys-221, and Cys-181–Cys-223.

The protein belongs to the NGF-beta family. In terms of assembly, homodimer.

The protein resides in the secreted. Nerve growth factor is important for the development and maintenance of the sympathetic and sensory nervous systems. It stimulates division and differentiation of sympathetic and embryonic sensory neurons. This chain is Nerve growth factor (ngf), found in Xenopus laevis (African clawed frog).